An 867-amino-acid chain; its full sequence is Elongation factor 2 (867 aa).

The tr-type G domain maps to 17-368; it reads HNIRNLSVVA…MIVLHLPSPV (352 aa). 26–33 is a binding site for GTP; it reads AHVDHGKS. T57 and T59 each carry phosphothreonine. GTP contacts are provided by residues 176 to 179 and 231 to 233; these read NKLD and SGL. H723 carries the diphthamide modification.

Belongs to the TRAFAC class translation factor GTPase superfamily. Classic translation factor GTPase family. EF-G/EF-2 subfamily. Phosphorylation by EF-2 kinase completely inactivates EF-2.

It is found in the cytoplasm. It carries out the reaction GTP + H2O = GDP + phosphate + H(+). In terms of biological role, catalyzes the GTP-dependent ribosomal translocation step during translation elongation. During this step, the ribosome changes from the pre-translocational (PRE) to the post-translocational (POST) state as the newly formed A-site-bound peptidyl-tRNA and P-site-bound deacylated tRNA move to the P and E sites, respectively. Catalyzes the coordinated movement of the two tRNA molecules, the mRNA and conformational changes in the ribosome. The protein is Elongation factor 2 of Blastocystis hominis.